A 141-amino-acid polypeptide reads, in one-letter code: uncharacterized protein (141 aa).

Residues 4-139 (RTQMMYDMET…LIELFSKLDK (136 aa)) form the HTH marR-type domain. The H-T-H motif DNA-binding region spans 53–76 (VTEFAPILEVSASHITAVTDALVE).

This is an uncharacterized protein from Bacillus subtilis (strain 168).